The following is a 525-amino-acid chain: Tigger transposable element-derived protein 2 (525 aa).

In terms of domain architecture, HTH psq-type spans 1–52; it reads MLGKRKRVVLTIKDKLDIIKKLEEGISFKKLSVVYGIGESTVRDIKKNKERI. 2 consecutive DNA-binding regions (H-T-H motif) follow at residues 28-48 and 100-132; these read FKKL…IKKN and TICA…FKQR. The 73-residue stretch at 67 to 139 folds into the HTH CENPB-type domain; sequence KRKSMKSSTY…KQRHGIPKAA (73 aa). Residues 168 to 385 form the DDE-1 domain; that stretch reads LQPEQIYGAD…VKSSTITKAW (218 aa). Residues 442-474 are disordered; it reads QVLTDSESAEDQTKAAEQKPSSKSRKTELNPEK.

This sequence belongs to the tigger transposable element derived protein family.

Its subcellular location is the nucleus. This is Tigger transposable element-derived protein 2 (TIGD2) from Homo sapiens (Human).